Here is a 241-residue protein sequence, read N- to C-terminus: 1-(5-phosphoribosyl)-5-[(5-phosphoribosylamino)methylideneamino] imidazole-4-carboxamide isomerase (241 aa).

The active-site Proton acceptor is Asp-8. Asp-130 acts as the Proton donor in catalysis.

The protein belongs to the HisA/HisF family.

It localises to the cytoplasm. It catalyses the reaction 1-(5-phospho-beta-D-ribosyl)-5-[(5-phospho-beta-D-ribosylamino)methylideneamino]imidazole-4-carboxamide = 5-[(5-phospho-1-deoxy-D-ribulos-1-ylimino)methylamino]-1-(5-phospho-beta-D-ribosyl)imidazole-4-carboxamide. Its pathway is amino-acid biosynthesis; L-histidine biosynthesis; L-histidine from 5-phospho-alpha-D-ribose 1-diphosphate: step 4/9. The polypeptide is 1-(5-phosphoribosyl)-5-[(5-phosphoribosylamino)methylideneamino] imidazole-4-carboxamide isomerase (Francisella philomiragia subsp. philomiragia (strain ATCC 25017 / CCUG 19701 / FSC 153 / O#319-036)).